The following is a 203-amino-acid chain: uncharacterized protein (203 aa).

The helical transmembrane segment at 89–109 threads the bilayer; it reads CEIPFAACSVLSWSLPTIAAL.

The protein localises to the membrane. This is an uncharacterized protein from Saccharomyces cerevisiae (strain ATCC 204508 / S288c) (Baker's yeast).